Reading from the N-terminus, the 194-residue chain is NADH-quinone oxidoreductase subunit B (194 aa).

4 residues coordinate [4Fe-4S] cluster: Cys-73, Cys-74, Cys-138, and Cys-168.

This sequence belongs to the complex I 20 kDa subunit family. As to quaternary structure, NDH-1 is composed of 14 different subunits. Subunits NuoB, C, D, E, F, and G constitute the peripheral sector of the complex. [4Fe-4S] cluster serves as cofactor.

Its subcellular location is the cell inner membrane. It carries out the reaction a quinone + NADH + 5 H(+)(in) = a quinol + NAD(+) + 4 H(+)(out). In terms of biological role, NDH-1 shuttles electrons from NADH, via FMN and iron-sulfur (Fe-S) centers, to quinones in the respiratory chain. The immediate electron acceptor for the enzyme in this species is believed to be ubiquinone. Couples the redox reaction to proton translocation (for every two electrons transferred, four hydrogen ions are translocated across the cytoplasmic membrane), and thus conserves the redox energy in a proton gradient. This chain is NADH-quinone oxidoreductase subunit B, found in Rhizobium johnstonii (strain DSM 114642 / LMG 32736 / 3841) (Rhizobium leguminosarum bv. viciae).